Consider the following 96-residue polypeptide: DNA-directed RNA polymerase subunit Rpo11 (96 aa).

Belongs to the archaeal Rpo11/eukaryotic RPB11/RPC19 RNA polymerase subunit family. Part of the RNA polymerase complex.

It is found in the cytoplasm. It catalyses the reaction RNA(n) + a ribonucleoside 5'-triphosphate = RNA(n+1) + diphosphate. Functionally, DNA-dependent RNA polymerase (RNAP) catalyzes the transcription of DNA into RNA using the four ribonucleoside triphosphates as substrates. In Methanococcus maripaludis (strain C6 / ATCC BAA-1332), this protein is DNA-directed RNA polymerase subunit Rpo11.